Here is a 363-residue protein sequence, read N- to C-terminus: Zinc finger protein 830 (363 aa).

Residue Ala-2 is modified to N-acetylalanine. A coiled-coil region spans residues 16–40 (VNQEELRRLMREKQRLSTNRKRIES). A C2H2-type zinc finger spans residues 53-75 (CALCNTPVKSELLWQTHVLGKQH). Residues 81 to 213 (ELKGAKGATQ…NPPKAPLVPH (133 aa)) are disordered. Over residues 90 to 99 (QGPSTGTVPQ) the composition is skewed to polar residues. Over residues 104–115 (RATDVESQDAKK) the composition is skewed to basic and acidic residues. The segment covering 129-143 (SASSANLDAARAAPS) has biased composition (low complexity). Residues 152-164 (DYDDEEEEEEEGG) are compositionally biased toward acidic residues. A compositionally biased stretch (basic and acidic residues) spans 165–184 (GEERRDSSKHLPDAQGKEHS). The span at 189–205 (RETTSNVLPNDPFNTNP) shows a compositional bias: polar residues. Phosphoserine is present on Ser-216. Positions 303–331 (IECYRRVEKLRNRQDEIKNKLKEVLTIKE) form a coiled coil. Ser-342 and Ser-353 each carry phosphoserine.

Component of the XAB2 complex, a multimeric protein complex composed of XAB2, PRPF19, AQR, ZNF830, ISY1, and PPIE; this complex binds preferentially to RNA. Interacts with XAB2. Identified in a pentameric intron-binding (IB) complex composed of AQR, XAB2, ISY1, ZNF830 and PPIE that is incorporated into the spliceosome as a preassembled complex. The IB complex does not contain PRPF19. In terms of processing, phosphorylated in response to DNA damage by the cell cycle checkpoint kinases ATR/ATM. As to expression, widely expressed at low level. Expressed in oocytes from primordial to antral follicles. Also detected in somatic cells of the ovary, namely, in granulosa cells from the pre-antral follicle stage onward.

Its subcellular location is the nucleus. It is found in the chromosome. It localises to the nucleus speckle. Functionally, may play a role in pre-mRNA splicing as component of the spliceosome. Acts as an important regulator of the cell cycle that participates in the maintenance of genome integrity. During cell cycle progression in embryonic fibroblast, prevents replication fork collapse, double-strand break formation and cell cycle checkpoint activation. Controls mitotic cell cycle progression and cell survival in rapidly proliferating intestinal epithelium and embryonic stem cells. During the embryo preimplantation, controls different aspects of M phase. During early oocyte growth, plays a role in oocyte survival by preventing chromosomal breaks formation, activation of TP63 and reduction of transcription. This Mus musculus (Mouse) protein is Zinc finger protein 830.